We begin with the raw amino-acid sequence, 453 residues long: Bis(5'-adenosyl)-triphosphatase ENPP4 (453 aa).

The N-terminal stretch at M1–G15 is a signal peptide. Over F16–A407 the chain is Extracellular. Residues D34 and T70 each contribute to the Zn(2+) site. Residue T70 is the AMP-threonine intermediate of the active site. Substrate-binding residues include N91 and Y154. N155 and N166 each carry an N-linked (GlcNAc...) asparagine glycan. Zn(2+) contacts are provided by D189, H193, D237, and H238. D189 lines the substrate pocket. The cysteines at positions 254 and 287 are disulfide-linked. A glycan (N-linked (GlcNAc...) asparagine) is linked at N276. H336 contacts Zn(2+). An N-linked (GlcNAc...) asparagine glycan is attached at N386. C394 and C401 form a disulfide bridge. Residues I408–M428 form a helical membrane-spanning segment. The Cytoplasmic segment spans residues Q429–G453.

The protein belongs to the nucleotide pyrophosphatase/phosphodiesterase family. It depends on Zn(2+) as a cofactor. As to expression, expressed on the surface of vascular endothelia.

It localises to the cell membrane. The enzyme catalyses P(1),P(3)-bis(5'-adenosyl) triphosphate + H2O = AMP + ADP + 2 H(+). Functionally, hydrolyzes extracellular Ap3A into AMP and ADP, and Ap4A into AMP and ATP. Ap3A and Ap4A are diadenosine polyphosphates thought to induce proliferation of vascular smooth muscle cells. Acts as a procoagulant, mediating platelet aggregation at the site of nascent thrombus via release of ADP from Ap3A and activation of ADP receptors. In Homo sapiens (Human), this protein is Bis(5'-adenosyl)-triphosphatase ENPP4 (ENPP4).